Here is a 445-residue protein sequence, read N- to C-terminus: Mannan endo-1,4-beta-mannosidase 2 (445 aa).

Residues M1–G27 form the signal peptide. W110 contacts substrate. A glycan (N-linked (GlcNAc...) asparagine) is linked at N181. N226 provides a ligand contact to substrate. E227 serves as the catalytic Proton donor. Y309 contributes to the substrate binding site. Residue E349 is the Nucleophile of the active site. W391 serves as a coordination point for substrate.

This sequence belongs to the glycosyl hydrolase 5 (cellulase A) family. Expressed in stems and seeds, and at lower levels in roots and leaves.

Its subcellular location is the secreted. It catalyses the reaction Random hydrolysis of (1-&gt;4)-beta-D-mannosidic linkages in mannans, galactomannans and glucomannans.. This is Mannan endo-1,4-beta-mannosidase 2 (MAN2) from Oryza sativa subsp. japonica (Rice).